A 257-amino-acid polypeptide reads, in one-letter code: Type III pantothenate kinase (257 aa).

Asp6–Val13 lines the ATP pocket. Residues Tyr100 and Gly107–Arg110 contribute to the substrate site. Asp109 serves as the catalytic Proton acceptor. Asp129 is a binding site for K(+). Position 132 (Thr132) interacts with ATP. Residue Thr185 participates in substrate binding.

The protein belongs to the type III pantothenate kinase family. Homodimer. NH4(+) is required as a cofactor. K(+) serves as cofactor.

Its subcellular location is the cytoplasm. The catalysed reaction is (R)-pantothenate + ATP = (R)-4'-phosphopantothenate + ADP + H(+). It participates in cofactor biosynthesis; coenzyme A biosynthesis; CoA from (R)-pantothenate: step 1/5. Its function is as follows. Catalyzes the phosphorylation of pantothenate (Pan), the first step in CoA biosynthesis. In Desulfatibacillum aliphaticivorans, this protein is Type III pantothenate kinase.